The sequence spans 181 residues: Large ribosomal subunit protein uL6 (181 aa).

The protein belongs to the universal ribosomal protein uL6 family. In terms of assembly, part of the 50S ribosomal subunit.

Its function is as follows. This protein binds to the 23S rRNA, and is important in its secondary structure. It is located near the subunit interface in the base of the L7/L12 stalk, and near the tRNA binding site of the peptidyltransferase center. In Saccharolobus solfataricus (strain ATCC 35092 / DSM 1617 / JCM 11322 / P2) (Sulfolobus solfataricus), this protein is Large ribosomal subunit protein uL6.